Consider the following 383-residue polypeptide: S-adenosylmethionine:tRNA ribosyltransferase-isomerase (383 aa).

This sequence belongs to the QueA family. Monomer.

Its subcellular location is the cytoplasm. The enzyme catalyses 7-aminomethyl-7-carbaguanosine(34) in tRNA + S-adenosyl-L-methionine = epoxyqueuosine(34) in tRNA + adenine + L-methionine + 2 H(+). It functions in the pathway tRNA modification; tRNA-queuosine biosynthesis. Its function is as follows. Transfers and isomerizes the ribose moiety from AdoMet to the 7-aminomethyl group of 7-deazaguanine (preQ1-tRNA) to give epoxyqueuosine (oQ-tRNA). The sequence is that of S-adenosylmethionine:tRNA ribosyltransferase-isomerase from Rickettsia prowazekii (strain Madrid E).